The following is a 578-amino-acid chain: MTFSIENNKQVVLGEELGKLSDNERLKTQSNFLRGTIEQDLQDRITGGFTADNFQLIRFHGMYQQDDRDIRNERAKQKLEPLHNVMLRARMPGGIITPKQWLAIDKFATEHSLYGSIRLTTRQTFQFHGVLKPNIKLMHQTLNSIGIDSIATAGDVNRNVLCTTNPVESELHQEAYEWAKKISEHLLPKTKAYAEIWLDGEKVETTEDDEPILGKTYLPRKFKTTVVIPPQNDVDVHANDLNFVAIAEKGKLIGFNVLVGGGLAMTHGDTSTYPRRADDFGYIPLEKTLDVAAAVVTTQRDWGNRSNRKNAKTKYTLDRVGTDVFKAEVEKRAGIKFEVSRPYEFTERGDRIGWVEGIDGKHHLTLFIENGRLLDYPGKPLKTGVAEIAKIHKGDFRMTANQNLIVAGVSKSNKAKIEKLAREHGLMDEGVSEQRKNAMACVAFPTCPLAMAEAERFLPQFVTDVEGILDKHGLDKEDNIILRVTGCPNGCGRAMLAEIGLVGKAPGRYNLHLGGNRGGTRVPKMYKENITDKQILEEIDQLVGRWANERLPNECFGDFTVRVGIIEEVIISKRDFYA.

Residues cysteine 441, cysteine 447, cysteine 487, and cysteine 491 each contribute to the [4Fe-4S] cluster site. Cysteine 491 serves as a coordination point for siroheme.

It belongs to the nitrite and sulfite reductase 4Fe-4S domain family. In terms of assembly, alpha(8)-beta(8). The alpha component is a flavoprotein, the beta component is a hemoprotein. Siroheme is required as a cofactor. [4Fe-4S] cluster serves as cofactor.

The catalysed reaction is hydrogen sulfide + 3 NADP(+) + 3 H2O = sulfite + 3 NADPH + 4 H(+). Its pathway is sulfur metabolism; hydrogen sulfide biosynthesis; hydrogen sulfide from sulfite (NADPH route): step 1/1. Functionally, component of the sulfite reductase complex that catalyzes the 6-electron reduction of sulfite to sulfide. This is one of several activities required for the biosynthesis of L-cysteine from sulfate. This is Sulfite reductase [NADPH] hemoprotein beta-component from Vibrio vulnificus (strain CMCP6).